The sequence spans 260 residues: NAD kinase (260 aa).

Asp-54 functions as the Proton acceptor in the catalytic mechanism. Residues 54–55 (DG), 123–124 (ND), Arg-150, Asp-152, and 163–168 (TAYSLS) contribute to the NAD(+) site.

Belongs to the NAD kinase family. A divalent metal cation is required as a cofactor.

The protein resides in the cytoplasm. It catalyses the reaction NAD(+) + ATP = ADP + NADP(+) + H(+). In terms of biological role, involved in the regulation of the intracellular balance of NAD and NADP, and is a key enzyme in the biosynthesis of NADP. Catalyzes specifically the phosphorylation on 2'-hydroxyl of the adenosine moiety of NAD to yield NADP. The polypeptide is NAD kinase (Caldicellulosiruptor saccharolyticus (strain ATCC 43494 / DSM 8903 / Tp8T 6331)).